The chain runs to 383 residues: Protein delta homolog 2 (383 aa).

Residues 1 to 26 (MPSGCRCLHLVCLLCILAAPVKPVRA) form the signal peptide. EGF-like domains lie at 27-58 (DDCS…LHCE), 62-89 (RMPG…KFCD), 91-129 (DEHV…RDCE), and 131-172 (KEGP…AHCE). Residues 27–306 (DDCSSHCDLA…RQEAGLGKSS (280 aa)) lie on the Extracellular side of the membrane. 17 disulfides stabilise this stretch: C29-C40, C33-C46, C48-C57, C66-C71, C79-C88, C95-C107, C101-C117, C119-C128, C135-C148, C142-C160, C162-C171, C178-C189, C183-C198, C200-C209, C216-C227, C221-C236, and C238-C247. N-linked (GlcNAc...) asparagine glycosylation is present at N157. Positions 174-210 (NVDDCLMRPCANGATCLDGINRFSCLCPEGFAGRFCT) constitute an EGF-like 5; calcium-binding domain. The 37-residue stretch at 212–248 (NLDDCASRPCQRGARCRDRVHDFDCLCPSGYGGKTCE) folds into the EGF-like 6; calcium-binding domain. A helical membrane pass occupies residues 307–327 (LVAVVVFGAVTATLVLSTVLL). The Cytoplasmic segment spans residues 328–383 (TLRAWRRGVCPPGPCCYPAPHYAPARQDQECQVSMLPAGLPLPPDLPPEPGKTTAL).

The protein localises to the membrane. Its function is as follows. Regulates adipogenesis. This is Protein delta homolog 2 (DLK2) from Sus scrofa (Pig).